The following is a 329-amino-acid chain: GTPase Obg (329 aa).

In terms of domain architecture, Obg spans 1–159; the sequence is MQFIDQARIT…WPLQLELKLL (159 aa). Positions 160–328 constitute an OBG-type G domain; that stretch reads AEVGIIGLPN…LLAETWVELG (169 aa). ATP contacts are provided by residues 166-173, 191-195, 213-216, 280-283, and 309-311; these read GLPNAGKS, FTTLV, DIPG, NKQE, and SAA. Mg(2+) contacts are provided by Ser-173 and Thr-193.

The protein belongs to the TRAFAC class OBG-HflX-like GTPase superfamily. OBG GTPase family. In terms of assembly, monomer. Mg(2+) serves as cofactor.

Its subcellular location is the cytoplasm. In terms of biological role, an essential GTPase which binds GTP, GDP and possibly (p)ppGpp with moderate affinity, with high nucleotide exchange rates and a fairly low GTP hydrolysis rate. Plays a role in control of the cell cycle, stress response, ribosome biogenesis and in those bacteria that undergo differentiation, in morphogenesis control. In Synechococcus sp. (strain CC9605), this protein is GTPase Obg.